The following is a 284-amino-acid chain: NAD kinase (284 aa).

Residue D60 is the Proton acceptor of the active site. Residues 60–61 (DG), 134–135 (ND), R145, K162, D164, 175–180 (TAYSFS), and Q234 each bind NAD(+).

It belongs to the NAD kinase family. A divalent metal cation is required as a cofactor.

It is found in the cytoplasm. It catalyses the reaction NAD(+) + ATP = ADP + NADP(+) + H(+). Its function is as follows. Involved in the regulation of the intracellular balance of NAD and NADP, and is a key enzyme in the biosynthesis of NADP. Catalyzes specifically the phosphorylation on 2'-hydroxyl of the adenosine moiety of NAD to yield NADP. The sequence is that of NAD kinase from Clostridium beijerinckii (strain ATCC 51743 / NCIMB 8052) (Clostridium acetobutylicum).